The following is a 219-amino-acid chain: Cytochrome c biogenesis ATP-binding export protein CcmA (219 aa).

The ABC transporter domain occupies Ile10–Val218. Position 42–49 (Gly42–Thr49) interacts with ATP.

Belongs to the ABC transporter superfamily. CcmA exporter (TC 3.A.1.107) family. In terms of assembly, the complex is composed of two ATP-binding proteins (CcmA) and two transmembrane proteins (CcmB).

The protein resides in the cell inner membrane. The catalysed reaction is heme b(in) + ATP + H2O = heme b(out) + ADP + phosphate + H(+). Functionally, part of the ABC transporter complex CcmAB involved in the biogenesis of c-type cytochromes; once thought to export heme, this seems not to be the case, but its exact role is uncertain. Responsible for energy coupling to the transport system. This chain is Cytochrome c biogenesis ATP-binding export protein CcmA, found in Colwellia psychrerythraea (strain 34H / ATCC BAA-681) (Vibrio psychroerythus).